An 89-amino-acid chain; its full sequence is MNITLILFLIGILGFVLNRKNIILMLISIEIMLLAITFLILVSSLNMDDIIGQTYAIYIIVVAGAESAIGLGILVAFYRLRGSIAIEYK.

3 helical membrane passes run 1–21 (MNIT…NRKN), 22–42 (IILM…LILV), and 57–77 (IYII…LVAF).

Belongs to the complex I subunit 4L family.

The protein localises to the mitochondrion membrane. It catalyses the reaction a ubiquinone + NADH + 5 H(+)(in) = a ubiquinol + NAD(+) + 4 H(+)(out). In terms of biological role, core subunit of the mitochondrial membrane respiratory chain NADH dehydrogenase (Complex I) that is believed to belong to the minimal assembly required for catalysis. Complex I functions in the transfer of electrons from NADH to the respiratory chain. The immediate electron acceptor for the enzyme is believed to be ubiquinone. In Podospora anserina (strain S / ATCC MYA-4624 / DSM 980 / FGSC 10383) (Pleurage anserina), this protein is NADH-ubiquinone oxidoreductase chain 4L (ND4L).